Here is a 498-residue protein sequence, read N- to C-terminus: ATP synthase subunit beta, chloroplastic (498 aa).

An ATP-binding site is contributed by 172-179 (GGAGVGKT).

The protein belongs to the ATPase alpha/beta chains family. In terms of assembly, F-type ATPases have 2 components, CF(1) - the catalytic core - and CF(0) - the membrane proton channel. CF(1) has five subunits: alpha(3), beta(3), gamma(1), delta(1), epsilon(1). CF(0) has four main subunits: a(1), b(1), b'(1) and c(9-12).

The protein localises to the plastid. Its subcellular location is the chloroplast thylakoid membrane. The enzyme catalyses ATP + H2O + 4 H(+)(in) = ADP + phosphate + 5 H(+)(out). Functionally, produces ATP from ADP in the presence of a proton gradient across the membrane. The catalytic sites are hosted primarily by the beta subunits. This Chamaerops humilis (Mediterranean fan palm) protein is ATP synthase subunit beta, chloroplastic.